The following is a 423-amino-acid chain: Histidine--tRNA ligase (423 aa).

It belongs to the class-II aminoacyl-tRNA synthetase family. Homodimer.

Its subcellular location is the cytoplasm. The catalysed reaction is tRNA(His) + L-histidine + ATP = L-histidyl-tRNA(His) + AMP + diphosphate + H(+). The chain is Histidine--tRNA ligase from Prochlorococcus marinus (strain NATL1A).